The primary structure comprises 523 residues: Synaptotagmin-10 (523 aa).

Topologically, residues 1-55 (MSFRKEDGVSSLCQKALHIITELCFAGQVEWDKCSGIFPADRSGQGGGGTDISVS) are vesicular. The interval 13–35 (CQKALHIITELCFAGQVEWDKCS) is cysteine motif. Residues 56–76 (LLAVVVSFCGLALLVVSLFVF) traverse the membrane as a helical segment. Residues 77–523 (WKLCWPCWKS…CSSPRPPSTP (447 aa)) lie on the Cytoplasmic side of the membrane. The residue at position 136 (T136) is a Phosphothreonine. 2 consecutive C2 domains span residues 231-352 (TCGK…TVWK) and 363-496 (DLGE…THWH). Positions 262, 268, 320, 321, 322, 325, 328, 394, 400, 454, and 456 each coordinate Ca(2+).

It belongs to the synaptotagmin family. Homodimer; disulfide-linked via the cysteine motif. Can also form heterodimers with SYT3, SYT6, SYT7 and SYT9. It depends on Ca(2+) as a cofactor. In terms of tissue distribution, highly expressed in the olfactory bulb.

Its subcellular location is the cytoplasmic vesicle. The protein localises to the secretory vesicle membrane. Ca(2+) sensor specifically required for the Ca(2+)-dependent exocytosis of secretory vesicles containing IGF1 in neurons of the olfactory bulb. Exocytosis of IGF1 is required for sensory perception of smell. Not involved in Ca(2+)-dependent synaptic vesicle exocytosis. Acts through Ca(2+) and phospholipid binding to the C2 domain: Ca(2+) induces binding of the C2-domains to phospholipid membranes and to assembled SNARE-complexes; both actions contribute to triggering exocytosis. The sequence is that of Synaptotagmin-10 from Mus musculus (Mouse).